The primary structure comprises 351 residues: MKKVVVGLSGGVDSSTAAAILHHQGYEVIGLTLWLMKGKGQCCSEGMIDAADLCEQLGVPHQIVDIRDLFQTHIVDYLVTGYSAGITPLPCSQCNKTVKFGPMVQYAREELGCDRIATGHYARISYDEATGRYQLLRAIDRNKDQSYFLYDLSQDLLAATIFPLGELEKTDTRRIATEYGLKTADKPESQDLCLVESNGSMRAFLDKYLAPKSGDIVDTTGKILGQHDGVHHYTIGQRKGLGIAAAEPLYVIELDAENNKVVVGDRTKVTQPECTVNRVNWVSIAEPSTPIHAEVQIRYRSTPTPVTVIPLENSRVRLVFDEPQFSITPGQAAVWYDGEKVLGGGIIEQFS.

ATP-binding positions include 7–14 (GLSGGVDS) and leucine 33. Cysteine 94 functions as the Nucleophile in the catalytic mechanism. Cysteine 94 and cysteine 193 are oxidised to a cystine. ATP is bound at residue glycine 119. The interval 143 to 145 (KDQ) is interaction with tRNA. Cysteine 193 functions as the Cysteine persulfide intermediate in the catalytic mechanism. The interaction with tRNA stretch occupies residues 298–299 (RY).

This sequence belongs to the MnmA/TRMU family.

The protein resides in the cytoplasm. It carries out the reaction S-sulfanyl-L-cysteinyl-[protein] + uridine(34) in tRNA + AH2 + ATP = 2-thiouridine(34) in tRNA + L-cysteinyl-[protein] + A + AMP + diphosphate + H(+). Functionally, catalyzes the 2-thiolation of uridine at the wobble position (U34) of tRNA, leading to the formation of s(2)U34. The sequence is that of tRNA-specific 2-thiouridylase MnmA from Nostoc punctiforme (strain ATCC 29133 / PCC 73102).